Reading from the N-terminus, the 75-residue chain is RNA-binding protein KhpA (75 aa).

The 47-residue stretch at Lys-29 to Met-75 folds into the KH domain.

The protein belongs to the KhpA RNA-binding protein family. In terms of assembly, forms a complex with KhpB.

It is found in the cytoplasm. A probable RNA chaperone. Forms a complex with KhpB which binds to cellular RNA and controls its expression. Plays a role in peptidoglycan (PG) homeostasis and cell length regulation. The polypeptide is RNA-binding protein KhpA (Oceanobacillus iheyensis (strain DSM 14371 / CIP 107618 / JCM 11309 / KCTC 3954 / HTE831)).